A 72-amino-acid polypeptide reads, in one-letter code: Conotoxin Gla(2)-TxVI/A (72 aa).

Residues Met-1 to Ala-19 form the signal peptide. A propeptide spanning residues Leu-20–Gln-44 is cleaved from the precursor. Cystine bridges form between Cys-48/Cys-62, Cys-55/Cys-66, and Cys-61/Cys-70. A 4-carboxyglutamate modification is found at Glu-56. A 4-hydroxyproline modification is found at Pro-58. Residue Ser-71 is modified to Serine amide.

This sequence belongs to the conotoxin O2 superfamily. In terms of processing, brominated at one of the Trp residues. Expressed by the venom duct.

The protein localises to the secreted. The protein is Conotoxin Gla(2)-TxVI/A of Conus textile (Cloth-of-gold cone).